The following is a 223-amino-acid chain: Ribosomal RNA small subunit methyltransferase G (223 aa).

Residues G82, L87, 133–134, and R151 each bind S-adenosyl-L-methionine; that span reads AE.

Belongs to the methyltransferase superfamily. RNA methyltransferase RsmG family.

It is found in the cytoplasm. Specifically methylates the N7 position of guanine in position 518 of 16S rRNA. This chain is Ribosomal RNA small subunit methyltransferase G, found in Corynebacterium glutamicum (strain ATCC 13032 / DSM 20300 / JCM 1318 / BCRC 11384 / CCUG 27702 / LMG 3730 / NBRC 12168 / NCIMB 10025 / NRRL B-2784 / 534).